The following is a 141-amino-acid chain: Hemoglobin subunit alpha (141 aa).

Positions V1–R141 constitute a Globin domain. S3 bears the Phosphoserine mark. Residues K7 and K11 each carry the N6-succinyllysine modification. Residue K16 is modified to N6-acetyllysine; alternate. N6-succinyllysine; alternate is present on K16. Phosphotyrosine is present on Y24. S35 bears the Phosphoserine mark. The residue at position 40 (K40) is an N6-succinyllysine. S49 bears the Phosphoserine mark. H58 contacts O2. A heme b-binding site is contributed by H87. Position 102 is a phosphoserine (S102). Residue T108 is modified to Phosphothreonine. S124 and S131 each carry phosphoserine. Residues T134 and T137 each carry the phosphothreonine modification. Position 138 is a phosphoserine (S138).

Belongs to the globin family. In terms of assembly, heterotetramer of two alpha chains and two beta chains. In terms of tissue distribution, red blood cells.

Its function is as follows. Involved in oxygen transport from the lung to the various peripheral tissues. Hemopressin acts as an antagonist peptide of the cannabinoid receptor CNR1. Hemopressin-binding efficiently blocks cannabinoid receptor CNR1 and subsequent signaling. The sequence is that of Hemoglobin subunit alpha (HBA) from Urocitellus townsendii (Townsend's ground squirrel).